The sequence spans 39 residues: Small basic protein 1 (39 aa).

Gln1 is subject to Pyrrolidone carboxylic acid. 3 disulfides stabilise this stretch: Cys6–Cys32, Cys10–Cys26, and Cys14–Cys31.

The protein localises to the secreted. The sequence is that of Small basic protein 1 from Anas platyrhynchos (Mallard).